Reading from the N-terminus, the 325-residue chain is GTP 3',8-cyclase (325 aa).

The 216-residue stretch at 4–219 (NYNRNINYLR…HGLQQKFGLL (216 aa)) folds into the Radical SAM core domain. Position 13 (Arg-13) interacts with GTP. The [4Fe-4S] cluster site is built by Cys-20 and Cys-24. Tyr-26 contacts S-adenosyl-L-methionine. Residue Cys-27 coordinates [4Fe-4S] cluster. Arg-63 serves as a coordination point for GTP. Gly-67 serves as a coordination point for S-adenosyl-L-methionine. A GTP-binding site is contributed by Thr-94. Ser-118 lines the S-adenosyl-L-methionine pocket. GTP is bound at residue Lys-155. Residue Met-189 participates in S-adenosyl-L-methionine binding. [4Fe-4S] cluster-binding residues include Cys-254 and Cys-257. 259-261 (RLR) contacts GTP. Cys-271 serves as a coordination point for [4Fe-4S] cluster.

Belongs to the radical SAM superfamily. MoaA family. In terms of assembly, monomer and homodimer. The cofactor is [4Fe-4S] cluster.

The enzyme catalyses GTP + AH2 + S-adenosyl-L-methionine = (8S)-3',8-cyclo-7,8-dihydroguanosine 5'-triphosphate + 5'-deoxyadenosine + L-methionine + A + H(+). It participates in cofactor biosynthesis; molybdopterin biosynthesis. In terms of biological role, catalyzes the cyclization of GTP to (8S)-3',8-cyclo-7,8-dihydroguanosine 5'-triphosphate. This chain is GTP 3',8-cyclase, found in Desulforamulus reducens (strain ATCC BAA-1160 / DSM 100696 / MI-1) (Desulfotomaculum reducens).